A 703-amino-acid polypeptide reads, in one-letter code: Calpain-8 (703 aa).

Residues 45–344 (LFKDPEFPAC…YSRLEICNLS (300 aa)) enclose the Calpain catalytic domain. Residues Cys-105, His-262, and Asn-286 contribute to the active site. The domain III stretch occupies residues 355–512 (KWNLVLFNGR…VFSEKKAKAL (158 aa)). Positions 513–531 (EIGDTVSGHPHEPHPRDMD) are linker. EF-hand domains follow at residues 532-566 (EEDEHVRSLFEEFVGKDSEISANQLKRVLNEVLSK), 575-608 (FNINTCREMISLLDSDGTGSLGPMEFKTLWLKIR), 605-640 (LKIRTYLEIFQEMDHNHVGTIEAHEMRTALKKAGFT), and 670-703 (IRLETLFKLFRLLDKDQNGIVQLSLAEWLCCVLV). The domain IV stretch occupies residues 532–703 (EEDEHVRSLF…LAEWLCCVLV (172 aa)). Ca(2+) contacts are provided by Asp-588, Asp-590, Thr-592, Ser-594, Glu-599, Asp-618, Asn-620, Thr-624, and Glu-629.

Belongs to the peptidase C2 family. As to quaternary structure, monomer and homooligomer. Interacts with COPS1/GPS1, COPB1, EYA2, NME2, NME4 and TOMM70. Ca(2+) is required as a cofactor. Undergoes autolytic cleavage between Ala-5 and Ala-6 which gives rise to fragments extending from Ala-6 to the C-terminus, Ala-6 to the EF-hand 2 domain and from Ala-6 to the beginning of domain III. Predominantly expressed in the stomach. Localizes strictly to the surface mucus cells in the gastric epithelium and the mucus-secreting goblet cells in the duodenum. Detected in the pituitary after estrogen stimulation.

It localises to the cytoplasm. The protein resides in the golgi apparatus. It catalyses the reaction Broad endopeptidase specificity.. In terms of biological role, calcium-regulated non-lysosomal thiol-protease. Involved in membrane trafficking in the gastric surface mucus cells (pit cells) and may involve the membrane trafficking of mucus cells via interactions with coat protein. Proteolytically cleaves the beta-subunit of coatomer complex. The polypeptide is Calpain-8 (Capn8) (Rattus norvegicus (Rat)).